The following is an 868-amino-acid chain: Protein translocase subunit SecA (868 aa).

ATP is bound by residues Gln88, 106–110 (GEGKT), and Asp509. A compositionally biased stretch (polar residues) spans 816–827 (NAENEPLNYNNQ). Positions 816 to 868 (NAENEPLNYNNQGEDENFTPEKKIPRNAPCPCGSGKKYKDCHGKSGPKKGIFA) are disordered. Zn(2+) contacts are provided by Cys845, Cys847, Cys856, and His857.

This sequence belongs to the SecA family. In terms of assembly, monomer and homodimer. Part of the essential Sec protein translocation apparatus which comprises SecA, SecYEG and auxiliary proteins SecDF-YajC and YidC. It depends on Zn(2+) as a cofactor.

The protein localises to the cell inner membrane. Its subcellular location is the cytoplasm. It catalyses the reaction ATP + H2O + cellular proteinSide 1 = ADP + phosphate + cellular proteinSide 2.. Part of the Sec protein translocase complex. Interacts with the SecYEG preprotein conducting channel. Has a central role in coupling the hydrolysis of ATP to the transfer of proteins into and across the cell membrane, serving as an ATP-driven molecular motor driving the stepwise translocation of polypeptide chains across the membrane. This is Protein translocase subunit SecA from Campylobacter concisus (strain 13826).